The chain runs to 85 residues: Small ribosomal subunit protein uS17 (85 aa).

This sequence belongs to the universal ribosomal protein uS17 family. As to quaternary structure, part of the 30S ribosomal subunit.

Functionally, one of the primary rRNA binding proteins, it binds specifically to the 5'-end of 16S ribosomal RNA. This chain is Small ribosomal subunit protein uS17, found in Pasteurella multocida (strain Pm70).